The following is a 603-amino-acid chain: DNA mismatch repair protein MutL (603 aa).

This sequence belongs to the DNA mismatch repair MutL/HexB family.

Its function is as follows. This protein is involved in the repair of mismatches in DNA. It is required for dam-dependent methyl-directed DNA mismatch repair. May act as a 'molecular matchmaker', a protein that promotes the formation of a stable complex between two or more DNA-binding proteins in an ATP-dependent manner without itself being part of a final effector complex. The protein is DNA mismatch repair protein MutL of Bradyrhizobium diazoefficiens (strain JCM 10833 / BCRC 13528 / IAM 13628 / NBRC 14792 / USDA 110).